The primary structure comprises 122 residues: Large ribosomal subunit protein uL14 (122 aa).

This sequence belongs to the universal ribosomal protein uL14 family. Part of the 50S ribosomal subunit. Forms a cluster with proteins L3 and L19. In the 70S ribosome, L14 and L19 interact and together make contacts with the 16S rRNA in bridges B5 and B8.

Functionally, binds to 23S rRNA. Forms part of two intersubunit bridges in the 70S ribosome. This chain is Large ribosomal subunit protein uL14, found in Ruminiclostridium cellulolyticum (strain ATCC 35319 / DSM 5812 / JCM 6584 / H10) (Clostridium cellulolyticum).